Reading from the N-terminus, the 211-residue chain is 3-demethoxyubiquinol 3-hydroxylase (211 aa).

Fe cation-binding residues include glutamate 60, glutamate 90, histidine 93, glutamate 142, glutamate 174, and histidine 177.

Belongs to the COQ7 family. Fe cation is required as a cofactor.

Its subcellular location is the cell membrane. The catalysed reaction is a 5-methoxy-2-methyl-3-(all-trans-polyprenyl)benzene-1,4-diol + AH2 + O2 = a 3-demethylubiquinol + A + H2O. The protein operates within cofactor biosynthesis; ubiquinone biosynthesis. Its function is as follows. Catalyzes the hydroxylation of 2-nonaprenyl-3-methyl-6-methoxy-1,4-benzoquinol during ubiquinone biosynthesis. This is 3-demethoxyubiquinol 3-hydroxylase from Francisella tularensis subsp. novicida (strain U112).